Reading from the N-terminus, the 238-residue chain is MLTRKQQELLLFIHERMKESGVPPSFDEMKDALDLASKSGIHRLITALEERGFIRRLPNRARALEVIKLPEAYAGNPQVRRGFSPSVIEGSLGKPAAPAPAPKPAPPAENASVVVPVMGRIAAGVPISAIQNNMHDISVPIEMIGSGEHYALEIKGDSMIEAGILDGDTVIIRNASTASIGDIVVALIDDEEATLKRFRRKGASIALEAANPAYETRIFGPDRVKIQGKLVGLIRRYH.

The H-T-H motif DNA-binding region spans 26-46; sequence FDEMKDALDLASKSGIHRLIT. Residues Ser-158 and Lys-196 each act as for autocatalytic cleavage activity in the active site.

Belongs to the peptidase S24 family. As to quaternary structure, homodimer.

It carries out the reaction Hydrolysis of Ala-|-Gly bond in repressor LexA.. Its function is as follows. Represses a number of genes involved in the response to DNA damage (SOS response), including recA and lexA. In the presence of single-stranded DNA, RecA interacts with LexA causing an autocatalytic cleavage which disrupts the DNA-binding part of LexA, leading to derepression of the SOS regulon and eventually DNA repair. This Sinorhizobium medicae (strain WSM419) (Ensifer medicae) protein is LexA repressor.